The chain runs to 144 residues: Gastric inhibitory polypeptide (144 aa).

The first 21 residues, 1-21, serve as a signal peptide directing secretion; sequence MVALKTCSLLLVLLFLAVGLG. Propeptides lie at residues 22 to 42 and 87 to 144; these read EKEE…PRGP and EARA…LRSQ. The segment at 92 to 112 is disordered; the sequence is ELAGQSQRNEEKEAQGSSLPK.

The protein belongs to the glucagon family. As to expression, highly expressed in the duodenum and jejunum.

It is found in the secreted. Its function is as follows. Potent stimulator of insulin secretion and relatively poor inhibitor of gastric acid secretion. This Rattus norvegicus (Rat) protein is Gastric inhibitory polypeptide (Gip).